Here is a 329-residue protein sequence, read N- to C-terminus: Small ribosomal subunit protein RACK1 (329 aa).

WD repeat units lie at residues 19–59, 68–107, 110–149, 154–193, 196–235, 237–275, and 295–328; these read GHNG…ATSP, GHSHFVQDVVISHDGQFALSGSWDNTLRLWDITKGVSTRL, GHTQDVMSVAFSSDNRQIISGSRDATIKVWNTLGECKFTL, AHQDWVSCIRFSPNTPTIVSGSWDNKVKIWDIKSFKCNHT, DHTGYVNTVTISPDGSLCASGGKDTFACLWELSSGKPLYK, EARNTINALAFSPNKYWLSAATDDKIIIWDLLTKQVLAE, and PKAPACLSLAWSADGSVLYAGYNDGLIRVYKSSS.

Belongs to the WD repeat G protein beta family. Ribosomal protein RACK1 subfamily.

The chain is Small ribosomal subunit protein RACK1 (gpbB) from Dictyostelium discoideum (Social amoeba).